The primary structure comprises 179 residues: Large ribosomal subunit protein uL6 (179 aa).

It belongs to the universal ribosomal protein uL6 family. In terms of assembly, part of the 50S ribosomal subunit.

In terms of biological role, this protein binds to the 23S rRNA, and is important in its secondary structure. It is located near the subunit interface in the base of the L7/L12 stalk, and near the tRNA binding site of the peptidyltransferase center. The chain is Large ribosomal subunit protein uL6 from Synechococcus sp. (strain CC9311).